Consider the following 124-residue polypeptide: Glycine cleavage system H protein (124 aa).

The 83-residue stretch at 22-104 (TATVGITDFA…YGDGWMIEIE (83 aa)) folds into the Lipoyl-binding domain. Lys-63 is subject to N6-lipoyllysine.

This sequence belongs to the GcvH family. The glycine cleavage system is composed of four proteins: P, T, L and H. (R)-lipoate serves as cofactor.

The glycine cleavage system catalyzes the degradation of glycine. The H protein shuttles the methylamine group of glycine from the P protein to the T protein. This is Glycine cleavage system H protein from Salinibacter ruber (strain DSM 13855 / M31).